Here is a 481-residue protein sequence, read N- to C-terminus: CASP8 and FADD-like apoptosis regulator (481 aa).

DED domains follow at residues 6 to 78 (VSAE…RILK) and 97 to 172 (DYRV…LNTK). The segment at 6–200 (VSAEVIHQVE…QASLPKLSIK (195 aa)) is interaction with CASP8. Positions 6–229 (VSAEVIHQVE…DSQRTLVKTS (224 aa)) are interaction with FADD. Positions 6-307 (VSAEVIHQVE…YASMAQHQDY (302 aa)) are interaction with CASP8 propeptide. An interaction with CASP3 region spans residues 197-436 (LSIKYNSRLQ…KLSQQLKQGR (240 aa)). Positions 197 to 481 (LSIKYNSRLQ…LRKKLILAPT (285 aa)) are interaction with TRAF1 and TRAF2. The interval 219–481 (RDSQRTLVKT…LRKKLILAPT (263 aa)) is interaction with CASP8 subunits p18 and p10. The tract at residues 265-360 (DTKYLQETFT…RGKPKLFFIQ (96 aa)) is caspase. The interval 372–481 (SSLEVDGPSI…LRKKLILAPT (110 aa)) is interaction with CASP8.

This sequence belongs to the peptidase C14A family. TNFRSF6 stimulation triggers recruitment to the death-inducing signaling complex (DISC) formed by TNFRSF6, FADD and CASP8. A proteolytic fragment (p43) stays associated with the DISC. Interacts with RIPK1. Proteolytically processed by CASP8 generating subunits p43 and p12. Highly expressed in heart.

In terms of biological role, apoptosis regulator protein which may function as a crucial link between cell survival and cell death pathways in mammalian cells. Acts as an inhibitor of TNFRSF6 mediated apoptosis. A proteolytic fragment (p43) is likely retained in the death-inducing signaling complex (DISC) thereby blocking further recruitment and processing of caspase-8 at the complex. Full length and shorter isoforms have been shown either to induce apoptosis or to reduce TNFRSF-triggered apoptosis. Lacks enzymatic (caspase) activity. This Mus musculus (Mouse) protein is CASP8 and FADD-like apoptosis regulator (Cflar).